The sequence spans 118 residues: Ribosome-binding factor A (118 aa).

The protein belongs to the RbfA family. As to quaternary structure, monomer. Binds 30S ribosomal subunits, but not 50S ribosomal subunits or 70S ribosomes.

It is found in the cytoplasm. Its function is as follows. One of several proteins that assist in the late maturation steps of the functional core of the 30S ribosomal subunit. Associates with free 30S ribosomal subunits (but not with 30S subunits that are part of 70S ribosomes or polysomes). Required for efficient processing of 16S rRNA. May interact with the 5'-terminal helix region of 16S rRNA. This Bacillus cereus (strain AH820) protein is Ribosome-binding factor A.